Consider the following 584-residue polypeptide: MKNSHIYILYGSETGTAEGLAESLFRSLTRMGYDVLVNSMDDFNLENLLRPLQCVFICSTTGQGEMPLNMRKFWRFLLRKKLPNTFLNDMQYAVFGCGDTSYTRFNWASKKLDSRLRQLGAQSFSSRGEGDEQHPDGVEGVFAYWCNHLYSQLAAIKTPSRPAFGEFDLLPPSFQIIIDESLGCKVKGFEDNNIVRHSRGKIEATLVHNKRISNIKHWQDVRHLAFKIPNFERWKPGDVAVLYPWNDDMSVNSFIECMGWESIKYSPLIISSNVAERKLPWFPNILNVFNLVKYVLSIHSVPSRTFFEMASHFSNNKMHKERLQEFSSYKNIDDYYDYTTRPRRTVLETLQEFKSVQIPIEYALDAFPVIRGRQYSIANRCDNSTGILELAVALVKYQTILKSPRQGICSRWICDLHENTSFNIDILPGFLNLSYQSNKPLIMVGPGTGVAPLRALIQERIYNGLKENLLFFGCRNKSMDFLFEKDWEKYTEEGTLKLFCAFSRDQEKKKYVQHSIQENGELVYNLLNEKDGMFFVSGSSGKMPSSVKDAIAGIVSKYSGCSISDGYSFVTSLEKKNRYYQETW.

One can recognise a Flavodoxin-like domain in the interval 6–150 (IYILYGSETG…VFAYWCNHLY (145 aa)). FMN is bound by residues 12-17 (SETGTA), 59-62 (STTG), 97-106 (CGDTSYTRFN), and E132. Residues 199-436 (RGKIEATLVH…LPGFLNLSYQ (238 aa)) form the FAD-binding FR-type domain. Residues R343, 373-376 (RQYS), and 407-410 (GICS) contribute to the FAD site. NADP(+)-binding positions include T448, 503 to 504 (SR), and 509 to 513 (KKYVQ). W584 lines the FAD pocket.

It belongs to the NADPH-dependent diflavin oxidoreductase NDOR1 family. This sequence in the N-terminal section; belongs to the flavodoxin family. In the C-terminal section; belongs to the flavoprotein pyridine nucleotide cytochrome reductase family. In terms of assembly, interacts with dre2; as part of the cytosolic iron-sulfur (Fe-S) protein assembly (CIA) machinery. FAD serves as cofactor. It depends on FMN as a cofactor.

It localises to the cytoplasm. The protein resides in the mitochondrion. It carries out the reaction 2 oxidized [2Fe-2S]-[protein] + NADPH = 2 reduced [2Fe-2S]-[protein] + NADP(+) + H(+). NADPH-dependent reductase which is a central component of the cytosolic iron-sulfur (Fe-S) protein assembly (CIA) machinery. Transfers electrons from NADPH via its FAD and FMN prosthetic groups to the [2Fe-2S] cluster of dre2, another key component of the CIA machinery. In turn, this reduced cluster provides electrons for assembly of cytosolic iron-sulfur cluster proteins. Positively controls H(2)O(2)-induced cell death. This chain is NADPH-dependent diflavin oxidoreductase 1, found in Schizosaccharomyces pombe (strain 972 / ATCC 24843) (Fission yeast).